Consider the following 427-residue polypeptide: Glutamate-1-semialdehyde 2,1-aminomutase (427 aa).

Lys-265 is modified (N6-(pyridoxal phosphate)lysine).

It belongs to the class-III pyridoxal-phosphate-dependent aminotransferase family. HemL subfamily. In terms of assembly, homodimer. It depends on pyridoxal 5'-phosphate as a cofactor.

It is found in the cytoplasm. The catalysed reaction is (S)-4-amino-5-oxopentanoate = 5-aminolevulinate. It functions in the pathway porphyrin-containing compound metabolism; protoporphyrin-IX biosynthesis; 5-aminolevulinate from L-glutamyl-tRNA(Glu): step 2/2. The sequence is that of Glutamate-1-semialdehyde 2,1-aminomutase from Pseudomonas syringae pv. syringae (strain B728a).